A 230-amino-acid chain; its full sequence is Large ribosomal subunit protein uL1 (230 aa).

Belongs to the universal ribosomal protein uL1 family. In terms of assembly, part of the 50S ribosomal subunit.

Functionally, binds directly to 23S rRNA. The L1 stalk is quite mobile in the ribosome, and is involved in E site tRNA release. Its function is as follows. Protein L1 is also a translational repressor protein, it controls the translation of the L11 operon by binding to its mRNA. The polypeptide is Large ribosomal subunit protein uL1 (Lactobacillus acidophilus (strain ATCC 700396 / NCK56 / N2 / NCFM)).